Consider the following 412-residue polypeptide: Protein ALF (412 aa).

Disordered regions lie at residues 1–47 and 154–234; these read MDPE…PLPP and GLSE…GISE. Residues 31-47 show a composition bias toward pro residues; it reads PPQPPPPPLPPPQPLPP. Residues 187 to 196 show a composition bias toward basic residues; it reads MRQRRRKKVV. Positions 206-221 are enriched in acidic residues; that stretch reads MEEDEDTEEGQEDNED. 3 DNA-binding regions span residues 237 to 241, 306 to 313, and 377 to 380; these read REHPF, NKPKMRHY, and YVPT.

It belongs to the FLO/LFY family. Expressed in the floral meristem and also in the vegetative meristem.

The protein resides in the nucleus. Functionally, probable transcription factor required for the specification of floral meristem identity. This chain is Protein ALF (ALF), found in Petunia hybrida (Petunia).